Here is a 137-residue protein sequence, read N- to C-terminus: Transcription antitermination protein NusB (137 aa).

It belongs to the NusB family.

Its function is as follows. Involved in transcription antitermination. Required for transcription of ribosomal RNA (rRNA) genes. Binds specifically to the boxA antiterminator sequence of the ribosomal RNA (rrn) operons. This Finegoldia magna (strain ATCC 29328 / DSM 20472 / WAL 2508) (Peptostreptococcus magnus) protein is Transcription antitermination protein NusB.